Consider the following 1265-residue polypeptide: DNA-directed RNA polymerase subunit beta'' (1265 aa).

Cysteine 223, cysteine 297, cysteine 304, and cysteine 307 together coordinate Zn(2+).

Belongs to the RNA polymerase beta' chain family. RpoC2 subfamily. In plastids the minimal PEP RNA polymerase catalytic core is composed of four subunits: alpha, beta, beta', and beta''. When a (nuclear-encoded) sigma factor is associated with the core the holoenzyme is formed, which can initiate transcription. Zn(2+) serves as cofactor.

Its subcellular location is the plastid. It is found in the cyanelle. The catalysed reaction is RNA(n) + a ribonucleoside 5'-triphosphate = RNA(n+1) + diphosphate. Its function is as follows. DNA-dependent RNA polymerase catalyzes the transcription of DNA into RNA using the four ribonucleoside triphosphates as substrates. The protein is DNA-directed RNA polymerase subunit beta'' of Cyanophora paradoxa.